We begin with the raw amino-acid sequence, 379 residues long: Alkanesulfonate monooxygenase (379 aa).

It belongs to the SsuD family.

It catalyses the reaction an alkanesulfonate + FMNH2 + O2 = an aldehyde + FMN + sulfite + H2O + 2 H(+). Its function is as follows. Catalyzes the desulfonation of aliphatic sulfonates. The chain is Alkanesulfonate monooxygenase from Pseudomonas syringae pv. tomato (strain ATCC BAA-871 / DC3000).